Here is a 99-residue protein sequence, read N- to C-terminus: Integration host factor subunit alpha (99 aa).

This sequence belongs to the bacterial histone-like protein family. As to quaternary structure, heterodimer of an alpha and a beta chain.

Functionally, this protein is one of the two subunits of integration host factor, a specific DNA-binding protein that functions in genetic recombination as well as in transcriptional and translational control. This Nitrosococcus oceani (strain ATCC 19707 / BCRC 17464 / JCM 30415 / NCIMB 11848 / C-107) protein is Integration host factor subunit alpha.